We begin with the raw amino-acid sequence, 163 residues long: MNVYEGSLVATGLKVGLVVARFNSLVTEQLLVGAADALRRHGVKDGDIDVFRCPGTFELPALLRRVARSARYDAVVALGAVIRGGTPHFEYVAGEATKGVAQIALESDCAVSMGILTCDTLEQALERAGVKAGNKGAEAAVAAVEQANVLREAAKVPSPRRAE.

Residues Phe-22, 56–58 (TFE), and 80–82 (AVI) each bind 5-amino-6-(D-ribitylamino)uracil. 85-86 (GT) contributes to the (2S)-2-hydroxy-3-oxobutyl phosphate binding site. His-88 acts as the Proton donor in catalysis. A 5-amino-6-(D-ribitylamino)uracil-binding site is contributed by Met-113. Arg-127 contacts (2S)-2-hydroxy-3-oxobutyl phosphate.

This sequence belongs to the DMRL synthase family.

It catalyses the reaction (2S)-2-hydroxy-3-oxobutyl phosphate + 5-amino-6-(D-ribitylamino)uracil = 6,7-dimethyl-8-(1-D-ribityl)lumazine + phosphate + 2 H2O + H(+). Its pathway is cofactor biosynthesis; riboflavin biosynthesis; riboflavin from 2-hydroxy-3-oxobutyl phosphate and 5-amino-6-(D-ribitylamino)uracil: step 1/2. In terms of biological role, catalyzes the formation of 6,7-dimethyl-8-ribityllumazine by condensation of 5-amino-6-(D-ribitylamino)uracil with 3,4-dihydroxy-2-butanone 4-phosphate. This is the penultimate step in the biosynthesis of riboflavin. The polypeptide is 6,7-dimethyl-8-ribityllumazine synthase (Anaeromyxobacter sp. (strain Fw109-5)).